The sequence spans 336 residues: Ornithine carbamoyltransferase, catabolic (336 aa).

Residues 62–65 (STRT), Q89, R113, and 140–143 (HPTQ) contribute to the carbamoyl phosphate site. L-ornithine-binding positions include N172, D236, and 240–241 (SM). Residues 277–278 (CL) and R322 each bind carbamoyl phosphate.

It belongs to the aspartate/ornithine carbamoyltransferase superfamily. OTCase family.

It localises to the cytoplasm. The enzyme catalyses carbamoyl phosphate + L-ornithine = L-citrulline + phosphate + H(+). The protein operates within amino-acid degradation; L-arginine degradation via ADI pathway; carbamoyl phosphate from L-arginine: step 2/2. Its function is as follows. Reversibly catalyzes the transfer of the carbamoyl group from carbamoyl phosphate (CP) to the N(epsilon) atom of ornithine (ORN) to produce L-citrulline. The protein is Ornithine carbamoyltransferase, catabolic of Staphylococcus aureus (strain MSSA476).